The sequence spans 215 residues: Adenylate kinase (215 aa).

An ATP-binding site is contributed by 10–15 (GAGKGT). Positions 30-59 (STGDMLRAAVKAGTPIGLKAKAVMEAGELV) are NMP. AMP-binding positions include Thr31, Arg36, 57–59 (ELV), 85–88 (GYPR), and Gln92. The tract at residues 126-163 (GRYTCANCGEGYHDRFKQPKVAGVCDVCGSAEFKRRPD) is LID. Arg127 is an ATP binding site. Zn(2+) contacts are provided by Cys130, Cys133, Cys150, and Cys153. 2 residues coordinate AMP: Arg160 and Arg172. Ala200 is a binding site for ATP.

It belongs to the adenylate kinase family. Monomer.

The protein localises to the cytoplasm. It carries out the reaction AMP + ATP = 2 ADP. The protein operates within purine metabolism; AMP biosynthesis via salvage pathway; AMP from ADP: step 1/1. Catalyzes the reversible transfer of the terminal phosphate group between ATP and AMP. Plays an important role in cellular energy homeostasis and in adenine nucleotide metabolism. The sequence is that of Adenylate kinase from Rhizorhabdus wittichii (strain DSM 6014 / CCUG 31198 / JCM 15750 / NBRC 105917 / EY 4224 / RW1) (Sphingomonas wittichii).